Consider the following 354-residue polypeptide: DNA polymerase IV (354 aa).

The region spanning 14 to 198 is the UmuC domain; sequence IIHIDMDAFF…MDIAKFHGVG (185 aa). Mg(2+) contacts are provided by Asp-18 and Asp-116. Glu-117 is a catalytic residue.

This sequence belongs to the DNA polymerase type-Y family. As to quaternary structure, monomer. Requires Mg(2+) as cofactor.

It localises to the cytoplasm. It carries out the reaction DNA(n) + a 2'-deoxyribonucleoside 5'-triphosphate = DNA(n+1) + diphosphate. In terms of biological role, poorly processive, error-prone DNA polymerase involved in untargeted mutagenesis. Copies undamaged DNA at stalled replication forks, which arise in vivo from mismatched or misaligned primer ends. These misaligned primers can be extended by PolIV. Exhibits no 3'-5' exonuclease (proofreading) activity. May be involved in translesional synthesis, in conjunction with the beta clamp from PolIII. The chain is DNA polymerase IV from Streptococcus gordonii (strain Challis / ATCC 35105 / BCRC 15272 / CH1 / DL1 / V288).